The primary structure comprises 120 residues: Aspartate 1-decarboxylase (120 aa).

The Schiff-base intermediate with substrate; via pyruvic acid role is filled by Ser-25. At Ser-25 the chain carries Pyruvic acid (Ser). Thr-57 contributes to the substrate binding site. Catalysis depends on Tyr-58, which acts as the Proton donor. 73–75 is a substrate binding site; that stretch reads GAA.

It belongs to the PanD family. In terms of assembly, heterooctamer of four alpha and four beta subunits. The cofactor is pyruvate. In terms of processing, is synthesized initially as an inactive proenzyme, which is activated by self-cleavage at a specific serine bond to produce a beta-subunit with a hydroxyl group at its C-terminus and an alpha-subunit with a pyruvoyl group at its N-terminus.

Its subcellular location is the cytoplasm. The catalysed reaction is L-aspartate + H(+) = beta-alanine + CO2. It functions in the pathway cofactor biosynthesis; (R)-pantothenate biosynthesis; beta-alanine from L-aspartate: step 1/1. In terms of biological role, catalyzes the pyruvoyl-dependent decarboxylation of aspartate to produce beta-alanine. This is Aspartate 1-decarboxylase from Deinococcus deserti (strain DSM 17065 / CIP 109153 / LMG 22923 / VCD115).